We begin with the raw amino-acid sequence, 67 residues long: Beta-defensin 123 (67 aa).

The signal sequence occupies residues 1 to 20 (MKLLLLTLTVLLLLSQLTPG). Cystine bridges form between Cys25–Cys52, Cys32–Cys46, and Cys36–Cys53.

This sequence belongs to the beta-defensin family.

It is found in the secreted. Has antibacterial activity. This is Beta-defensin 123 (DEFB123) from Gorilla gorilla gorilla (Western lowland gorilla).